Here is a 311-residue protein sequence, read N- to C-terminus: Pyrimidine-specific ribonucleoside hydrolase RihA (311 aa).

Residue H240 is part of the active site.

The protein belongs to the IUNH family. RihA subfamily.

Hydrolyzes cytidine or uridine to ribose and cytosine or uracil, respectively. This chain is Pyrimidine-specific ribonucleoside hydrolase RihA, found in Salmonella arizonae (strain ATCC BAA-731 / CDC346-86 / RSK2980).